A 280-amino-acid polypeptide reads, in one-letter code: Probable 2-(5''-triphosphoribosyl)-3'-dephosphocoenzyme-A synthase (280 aa).

This sequence belongs to the CitG/MdcB family.

The enzyme catalyses 3'-dephospho-CoA + ATP = 2'-(5''-triphospho-alpha-D-ribosyl)-3'-dephospho-CoA + adenine. This Lactiplantibacillus plantarum (strain ATCC BAA-793 / NCIMB 8826 / WCFS1) (Lactobacillus plantarum) protein is Probable 2-(5''-triphosphoribosyl)-3'-dephosphocoenzyme-A synthase.